The chain runs to 218 residues: Cytochrome b6 (218 aa).

Residues 35–55 (IFYCLGGITLVCFLIQFATGF) traverse the membrane as a helical segment. Cys38 contacts heme c. Positions 89 and 103 each coordinate heme b. A run of 3 helical transmembrane segments spans residues 93–113 (ASMM…TGGF), 119–139 (LTWV…VTGY), and 189–209 (LHTF…FLMI). Residues His190 and His205 each contribute to the heme b site.

It belongs to the cytochrome b family. PetB subfamily. The 4 large subunits of the cytochrome b6-f complex are cytochrome b6, subunit IV (17 kDa polypeptide, PetD), cytochrome f and the Rieske protein, while the 4 small subunits are PetG, PetL, PetM and PetN. The complex functions as a dimer. The cofactor is heme b. It depends on heme c as a cofactor.

The protein localises to the cellular thylakoid membrane. Its function is as follows. Component of the cytochrome b6-f complex, which mediates electron transfer between photosystem II (PSII) and photosystem I (PSI), cyclic electron flow around PSI, and state transitions. The polypeptide is Cytochrome b6 (Synechococcus sp. (strain WH7803)).